The chain runs to 142 residues: Small ribosomal subunit protein bS16 (142 aa).

Residues Gly-88–Glu-142 form a disordered region. Over residues Ala-126–Glu-142 the composition is skewed to acidic residues.

It belongs to the bacterial ribosomal protein bS16 family.

The sequence is that of Small ribosomal subunit protein bS16 from Kocuria rhizophila (strain ATCC 9341 / DSM 348 / NBRC 103217 / DC2201).